A 447-amino-acid chain; its full sequence is Phosphoglucosamine mutase (447 aa).

The active-site Phosphoserine intermediate is serine 106. Mg(2+)-binding residues include serine 106, aspartate 245, aspartate 247, and aspartate 249. Serine 106 bears the Phosphoserine mark.

The protein belongs to the phosphohexose mutase family. Mg(2+) is required as a cofactor. Post-translationally, activated by phosphorylation.

It catalyses the reaction alpha-D-glucosamine 1-phosphate = D-glucosamine 6-phosphate. Catalyzes the conversion of glucosamine-6-phosphate to glucosamine-1-phosphate. This is Phosphoglucosamine mutase from Cupriavidus taiwanensis (strain DSM 17343 / BCRC 17206 / CCUG 44338 / CIP 107171 / LMG 19424 / R1) (Ralstonia taiwanensis (strain LMG 19424)).